We begin with the raw amino-acid sequence, 400 residues long: Elongation factor Tu (400 aa).

The tr-type G domain maps to 10–208 (KPHVNVGTIG…AMDNYIPDPQ (199 aa)). Positions 19-26 (GHIDHGKS) are G1. GTP is bound at residue 19–26 (GHIDHGKS). Ser-26 provides a ligand contact to Mg(2+). The interval 60-64 (GITIN) is G2. The segment at 81–84 (DCPG) is G3. GTP is bound by residues 81 to 85 (DCPGH) and 136 to 139 (NKTD). The segment at 136-139 (NKTD) is G4. The tract at residues 174–176 (SAL) is G5.

It belongs to the TRAFAC class translation factor GTPase superfamily. Classic translation factor GTPase family. EF-Tu/EF-1A subfamily. Monomer.

It localises to the cytoplasm. It catalyses the reaction GTP + H2O = GDP + phosphate + H(+). Its function is as follows. GTP hydrolase that promotes the GTP-dependent binding of aminoacyl-tRNA to the A-site of ribosomes during protein biosynthesis. The chain is Elongation factor Tu from Thermotoga maritima (strain ATCC 43589 / DSM 3109 / JCM 10099 / NBRC 100826 / MSB8).